The sequence spans 302 residues: 4-hydroxy-tetrahydrodipicolinate synthase (302 aa).

Residue T55 coordinates pyruvate. Y144 serves as the catalytic Proton donor/acceptor. K172 functions as the Schiff-base intermediate with substrate in the catalytic mechanism. V214 contributes to the pyruvate binding site.

The protein belongs to the DapA family. Homotetramer; dimer of dimers.

The protein localises to the cytoplasm. The enzyme catalyses L-aspartate 4-semialdehyde + pyruvate = (2S,4S)-4-hydroxy-2,3,4,5-tetrahydrodipicolinate + H2O + H(+). It participates in amino-acid biosynthesis; L-lysine biosynthesis via DAP pathway; (S)-tetrahydrodipicolinate from L-aspartate: step 3/4. Its function is as follows. Catalyzes the condensation of (S)-aspartate-beta-semialdehyde [(S)-ASA] and pyruvate to 4-hydroxy-tetrahydrodipicolinate (HTPA). The protein is 4-hydroxy-tetrahydrodipicolinate synthase of Parasynechococcus marenigrum (strain WH8102).